The primary structure comprises 206 residues: Ras-related protein Rab-7a (206 aa).

15–22 (GDSGVGKT) contributes to the GTP binding site. Residues S17 and S23 each carry the phosphoserine modification. Phosphothreonine occurs at positions 34, 40, and 64. GTP-binding positions include 34–40 (TQQYRAT) and 63–67 (DTAGQ). The Effector region motif lies at 37–45 (YRATVGADF). S72 is modified (phosphoserine). Residues Y78 and Y88 each carry the phosphotyrosine modification. Residues 125–128 (NKLD) and 157–158 (AK) contribute to the GTP site. S-geranylgeranyl cysteine attachment occurs at residues C205 and C206.

This sequence belongs to the small GTPase superfamily. Rab family.

It is found in the cytoplasmic vesicle. The protein resides in the phagosome membrane. It localises to the late endosome membrane. The protein localises to the lysosome membrane. Its subcellular location is the autophagosome membrane. It is found in the lipid droplet. The enzyme catalyses GTP + H2O = GDP + phosphate + H(+). Functionally, small GTPase which cycles between active GTP-bound and inactive GDP-bound states. In its active state, binds to a variety of effector proteins playing a key role in the regulation of endo-lysosomal trafficking. Governs early-to-late endosomal maturation, microtubule minus-end as well as plus-end directed endosomal migration and positioning, and endosome-lysosome transport through different protein-protein interaction cascades. Involved in lipophagy, a cytosolic lipase-independent autophagic pathway. Plays a role in phagocyte formation and acidification. This Paramecium octaurelia protein is Ras-related protein Rab-7a.